We begin with the raw amino-acid sequence, 477 residues long: Tyrosine-protein kinase transforming protein Fes (477 aa).

The interval 49–76 (GEPPPVLLLQDDRHSTSSSEQEREGGRT) is disordered. Positions 58–74 (QDDRHSTSSSEQEREGG) are enriched in basic and acidic residues. An SH2 domain is found at 115-204 (WYHGALPRAE…KSGIVLNRAV (90 aa)). The Protein kinase domain maps to 216–477 (LVLGEQIGRG…ELQSIRKRHR (262 aa)). ATP-binding positions include 222-230 (IGRGNFGEV) and Lys245. Residue Asp338 is the Proton acceptor of the active site. Residue Tyr368 is modified to Phosphotyrosine; by autocatalysis.

Belongs to the protein kinase superfamily. Tyr protein kinase family. Fes/fps subfamily.

It carries out the reaction L-tyrosyl-[protein] + ATP = O-phospho-L-tyrosyl-[protein] + ADP + H(+). The protein is Tyrosine-protein kinase transforming protein Fes (V-FES) of Feline sarcoma virus (strain Snyder-Theilen).